A 120-amino-acid chain; its full sequence is MIAFHMVWSALLASLLLLLLAPSASPVDAFSPPEASLTGGQSLSKRSLFDPSCTGVFDRQLLRRLGRVCDDCFNVFREPNVAMECRSNCYNNPVFRQCMEYLLPAHLHDEYRLAVQMVGK.

A signal peptide spans 1–27; that stretch reads MIAFHMVWSALLASLLLLLLAPSASPV. 3 disulfide bridges follow: Cys-53–Cys-89, Cys-69–Cys-85, and Cys-72–Cys-98. Position 118 is a valine amide (Val-118).

Belongs to the arthropod CHH/MIH/GIH/VIH hormone family.

It localises to the secreted. Hormone found in the sinus gland of isopods and decapods which controls the blood sugar level. Has a secretagogue action over the amylase released from the midgut gland. May act as a stress hormone and may be involved in the control of molting and reproduction. This chain is Crustacean hyperglycemic hormones 2, found in Penaeus japonicus (Kuruma prawn).